Consider the following 155-residue polypeptide: MNQAELQRHMEEVSLQFFQKEFRHQAVFNARLRTTGGRYLLKSHNIEMNPKYLENFGLAYFIGIMKHELCHYHLHIEKKGYQHRDQDFRELLKKVDAPRFCATIPREITMHEYTCKSCGKSFLRQRRFNVNRYRCGSCGGKLIQIGSKKIYTENA.

The SprT-like domain occupies 7–145; it reads QRHMEEVSLQ…GSCGGKLIQI (139 aa). Zn(2+) is bound at residue H67. E68 is a catalytic residue. Residue H71 coordinates Zn(2+).

This sequence belongs to the SprT family. It depends on Zn(2+) as a cofactor.

The protein resides in the cytoplasm. This Listeria monocytogenes serotype 4a (strain HCC23) protein is Protein SprT-like.